A 253-amino-acid polypeptide reads, in one-letter code: MGSDAWVGLWRPHRPRGPIAAHYGGPGPKYKLPPNTGYALHDPSRPRAPAFTFGARFPTQQTTCGPGPGHLVPARMTVRGTDGAPAYSIYGRPRRSAPFLTPGPGRYFPERAGNATYPSAPRHTIAPRNWGVQAEQQSPGPAAYTVPSLLGPRVIGKVSAPTCSIYGRRAAGSFFEDLSKTPGPCAYQVVSPGVYKSRAPQFTILARTSLPQDNTRKPGPAAYNVDQHRKPRGWSFGIRHSDYLAPLVTDADN.

One copy of the STPGR repeat lies at 182–207; the sequence is PGPCAYQVVSPGVYKSRAPQFTILAR.

The protein belongs to the CIMAP family.

The protein localises to the cell projection. It localises to the cilium. Its subcellular location is the flagellum. In Homo sapiens (Human), this protein is Ciliary microtubule associated protein 1B.